Consider the following 906-residue polypeptide: Protein translocase subunit SecA (906 aa).

ATP is bound by residues Gln86, 104–108 (GEGKT), and Asp511. Composition is skewed to basic and acidic residues over residues 853–865 (HESV…RHDE) and 877–888 (VRREGPKVKRND). Residues 853–906 (HESVIDNNQRHDEDEQEEAPKVQQVRREGPKVKRNDPCPCGSGKKYKQCHGKVE) are disordered. Zn(2+) is bound by residues Cys890, Cys892, Cys901, and His902. The span at 896-906 (KKYKQCHGKVE) shows a compositional bias: basic residues.

This sequence belongs to the SecA family. As to quaternary structure, monomer and homodimer. Part of the essential Sec protein translocation apparatus which comprises SecA, SecYEG and auxiliary proteins SecDF-YajC and YidC. Requires Zn(2+) as cofactor.

It is found in the cell inner membrane. The protein resides in the cytoplasm. The catalysed reaction is ATP + H2O + cellular proteinSide 1 = ADP + phosphate + cellular proteinSide 2.. Its function is as follows. Part of the Sec protein translocase complex. Interacts with the SecYEG preprotein conducting channel. Has a central role in coupling the hydrolysis of ATP to the transfer of proteins into and across the cell membrane, serving both as a receptor for the preprotein-SecB complex and as an ATP-driven molecular motor driving the stepwise translocation of polypeptide chains across the membrane. The sequence is that of Protein translocase subunit SecA from Francisella tularensis subsp. holarctica (strain FTNF002-00 / FTA).